Here is a 252-residue protein sequence, read N- to C-terminus: Triosephosphate isomerase (252 aa).

9–11 (NWK) provides a ligand contact to substrate. The active-site Electrophile is His-98. Glu-170 serves as the catalytic Proton acceptor. Substrate is bound by residues Gly-176 and Ser-215.

This sequence belongs to the triosephosphate isomerase family. Homodimer.

Its subcellular location is the cytoplasm. The catalysed reaction is D-glyceraldehyde 3-phosphate = dihydroxyacetone phosphate. Its pathway is carbohydrate biosynthesis; gluconeogenesis. It participates in carbohydrate degradation; glycolysis; D-glyceraldehyde 3-phosphate from glycerone phosphate: step 1/1. Functionally, involved in the gluconeogenesis. Catalyzes stereospecifically the conversion of dihydroxyacetone phosphate (DHAP) to D-glyceraldehyde-3-phosphate (G3P). This Buchnera aphidicola subsp. Baizongia pistaciae (strain Bp) protein is Triosephosphate isomerase.